The chain runs to 108 residues: MKKTLLLCAFLVGLVSSNVMALTLDEARTQGRVGETFYGYLVALKTDAETEKLVADINAERKASYQQLAKQNNVSVDDIAKLAGQKLVARAKPGEYVQGINGKWVRKF.

A signal peptide spans 1 to 21 (MKKTLLLCAFLVGLVSSNVMA).

The protein resides in the periplasm. Functionally, probably acts as a chaperone-like protein that contributes to, but is not required for, the formation of the YdbH-YnbE intermembrane bridge. Affects the function and the structure of the YdbH-YnbE complex. Overexpression of ydbL causes a negative effect on YdbH-YnbE function. The chain is Probable chaperone-like protein YdbL (ydbL) from Escherichia coli (strain K12).